The chain runs to 642 residues: UvrABC system protein C (642 aa).

The region spanning 20-97 (ERCGVYRMFD…IKKFQPKFNI (78 aa)) is the GIY-YIG domain. One can recognise a UVR domain in the interval 207–242 (KELQENLSKKMEELSSQMRFEEAAEIRDRIKALSYV).

Belongs to the UvrC family. In terms of assembly, interacts with UvrB in an incision complex.

It localises to the cytoplasm. The UvrABC repair system catalyzes the recognition and processing of DNA lesions. UvrC both incises the 5' and 3' sides of the lesion. The N-terminal half is responsible for the 3' incision and the C-terminal half is responsible for the 5' incision. The polypeptide is UvrABC system protein C (Rickettsia felis (strain ATCC VR-1525 / URRWXCal2) (Rickettsia azadi)).